The chain runs to 82 residues: Protein Rv1078A (82 aa).

Positions 35–54 (GGPTRRLRRRPAVTRRRRPD) are enriched in basic residues. The disordered stretch occupies residues 35–82 (GGPTRRLRRRPAVTRRRRPDRRFVRCRPSPTRRGLPGCWRHSSTGPHT).

Its subcellular location is the cytoplasm. This Mycobacterium tuberculosis (strain ATCC 25618 / H37Rv) protein is Protein Rv1078A.